Reading from the N-terminus, the 1123-residue chain is Ubiquitin carboxyl-terminal hydrolase 43 (1123 aa).

Residues M1–G102 are disordered. Positions R17–F28 are enriched in basic residues. Residues S29–S39 are compositionally biased toward low complexity. The USP domain maps to Q101 to R710. Catalysis depends on C110, which acts as the Nucleophile. The tract at residues E202 to S221 is disordered. The active-site Proton acceptor is H668. R746 is modified (asymmetric dimethylarginine). Disordered regions lie at residues I795–P826, T854–G886, F959–E1049, and S1068–Y1099. Phosphoserine is present on S969. Basic and acidic residues predominate over residues K979 to R990. Over residues V1016–S1027 the composition is skewed to low complexity. The residue at position 1041 (S1041) is a Phosphoserine.

Belongs to the peptidase C19 family. Expressed in brain, aorta and lung at low levels.

It catalyses the reaction Thiol-dependent hydrolysis of ester, thioester, amide, peptide and isopeptide bonds formed by the C-terminal Gly of ubiquitin (a 76-residue protein attached to proteins as an intracellular targeting signal).. Its function is as follows. May recognize and hydrolyze the peptide bond at the C-terminal Gly of ubiquitin. Involved in the processing of poly-ubiquitin precursors as well as that of ubiquitinated proteins. The chain is Ubiquitin carboxyl-terminal hydrolase 43 (USP43) from Homo sapiens (Human).